Reading from the N-terminus, the 344-residue chain is tRNA N6-adenosine threonylcarbamoyltransferase (344 aa).

Positions 110 and 114 each coordinate Fe cation. Substrate-binding positions include 133-137 (VMSGA), D166, G179, and N278. D303 contributes to the Fe cation binding site.

Belongs to the KAE1 / TsaD family. Fe(2+) is required as a cofactor.

It is found in the cytoplasm. It carries out the reaction L-threonylcarbamoyladenylate + adenosine(37) in tRNA = N(6)-L-threonylcarbamoyladenosine(37) in tRNA + AMP + H(+). Functionally, required for the formation of a threonylcarbamoyl group on adenosine at position 37 (t(6)A37) in tRNAs that read codons beginning with adenine. Is involved in the transfer of the threonylcarbamoyl moiety of threonylcarbamoyl-AMP (TC-AMP) to the N6 group of A37, together with TsaE and TsaB. TsaD likely plays a direct catalytic role in this reaction. In Chlamydia felis (strain Fe/C-56) (Chlamydophila felis), this protein is tRNA N6-adenosine threonylcarbamoyltransferase.